The following is a 967-amino-acid chain: Glutamate receptor 2.6 (967 aa).

The N-terminal stretch at 1 to 31 (MSLFNHLLSRALPLWLLFFINFLVLLGKSQQ) is a signal peptide. At 32–590 (EVLQVQVGIV…WVFLKPLTRE (559 aa)) the chain is on the extracellular side. Residues N45, N57, N121, N336, N345, N424, and N550 are each glycosylated (N-linked (GlcNAc...) asparagine). The chain crosses the membrane as a helical span at residues 591-611 (LWFLTAASFLYIGIMVWIFEY). Residues 612-621 (QASGDFRKQS) are Cytoplasmic-facing. A helical membrane pass occupies residues 622 to 642 (IINKISNVFYFSFSTLFFAHM). Residues 643-651 (RPSESIFTR) are Cytoplasmic-facing. The chain crosses the membrane as a helical span at residues 652-672 (VLVVVWCFVLLILTQSYTATL). The Extracellular portion of the chain corresponds to 673 to 832 (TSMLTVQELR…DSPIRLDHHS (160 aa)). N-linked (GlcNAc...) asparagine glycosylation is present at N795. Residues 833 to 853 (FEALFTIVFVVSMLLLLAMLV) traverse the membrane as a helical segment. Topologically, residues 854–967 (CRRYRQESKS…AALFSRIKSA (114 aa)) are cytoplasmic. The segment covering 864–874 (GEINANNSPTD) has biased composition (polar residues). Residues 864-913 (GEINANNSPTDGNMRAPPNQPTDDNMRAPTSPPIDDQVLEPPGPALNEAD) are disordered.

This sequence belongs to the glutamate-gated ion channel (TC 1.A.10.1) family. As to quaternary structure, may form heteromers. As to expression, expressed predominantly in roots.

It localises to the membrane. In terms of biological role, glutamate-gated receptor that probably acts as a non-selective cation channel. May be involved in light-signal transduction and calcium homeostasis via the regulation of calcium influx into cells. The protein is Glutamate receptor 2.6 (GLR2.6) of Arabidopsis thaliana (Mouse-ear cress).